Consider the following 381-residue polypeptide: MNIYKPIRKTHPIFKIINGSLIDLPTPSNISSLWNFGSLLAMCLIIQIITGLFLTMYYTANIELAFYSVNYICRNVNYGWLIRTLHANGASFFFICIYIHIGRGIYYESFNLKYTWMVGVIILFLLMATAFMGYVLPWGQMSFWGATVITNLLSAIPYLGTMLVNWIWGGFAIDNATLTRFYTFHFILPFIILMMTMIHLLFLHQTGSNNPLGINSNLDKIPFHPFFTFKDMIGFIIISFLLIFLTLTNPYLLGDPDNFTPANPLVTPIHIQPEWYFLFAYAILRSIPNKLGGVIALIMSILILIILPLTFFKKIQGIQFYPMNQILFWIMVVTIILLTWIGARPVEDPYVFVGQVLTIMYFSYYIINPMISIYWDKLIFN.

4 helical membrane-spanning segments follow: residues phenylalanine 36–methionine 56, tryptophan 80–isoleucine 101, tryptophan 116–leucine 136, and phenylalanine 181–leucine 201. Heme b-binding residues include histidine 86 and histidine 100. Heme b-binding residues include histidine 185 and histidine 199. Histidine 204 contributes to the a ubiquinone binding site. The next 4 helical transmembrane spans lie at phenylalanine 229–asparagine 249, leucine 291–phenylalanine 311, methionine 323–alanine 343, and tyrosine 350–methionine 370.

This sequence belongs to the cytochrome b family. In terms of assembly, the main subunits of complex b-c1 are: cytochrome b, cytochrome c1 and the Rieske protein. The cofactor is heme b.

Its subcellular location is the mitochondrion inner membrane. In terms of biological role, component of the ubiquinol-cytochrome c reductase complex (complex III or cytochrome b-c1 complex) that is part of the mitochondrial respiratory chain. The b-c1 complex mediates electron transfer from ubiquinol to cytochrome c. Contributes to the generation of a proton gradient across the mitochondrial membrane that is then used for ATP synthesis. This chain is Cytochrome b (MT-CYB), found in Ostrinia nubilalis (European corn borer).